Consider the following 1255-residue polypeptide: Membrane-associated guanylate kinase, WW and PDZ domain-containing protein 1 (1255 aa).

A PDZ 1 domain is found at 17-105 (ECTVKRGPQG…AVTFKAVRQG (89 aa)). The Guanylate kinase-like domain maps to 96-287 (AVTFKAVRQG…APITDPSQKF (192 aa)). 103–110 (RQGGRLNK) contacts ATP. Disordered regions lie at residues 208–227 (HSLQSGSKQSTPKRTKSYND) and 235–265 (HTENEEEEDVPEMNSSFTADSGDQDEPTLQE). The WW 1 domain occupies 300–333 (GPLPENWEMAYTENGEVYFIDHNAKTTSWLDPRC). Phosphoserine is present on Ser357. The WW 2 domain occupies 359-392 (LELPAGWEKIEDPVYGVYYVDHINRKTQYENPVL). Residues 395–462 (KRKRQLEQQQ…QGKPFFTRNP (68 aa)) are disordered. The span at 402–414 (QQQQQQQHQQQPQ) shows a compositional bias: low complexity. Pro residues predominate over residues 434-444 (PVAPSHPPSNP). Residues 471–553 (HTKLRKSSRG…GASVDLELCR (83 aa)) enclose the PDZ 2 domain. The span at 585 to 601 (QETYDSPASHSSKTGKV) shows a compositional bias: polar residues. Disordered stretches follow at residues 585–622 (QETYDSPASHSSKTGKVSNMKDARPSSPADVASNSSHG) and 719–820 (QRGG…GERD). Residues 642–720 (TVHIVKGPMG…GSEVTLLVQR (79 aa)) form the PDZ 3 domain. Ser729 and Ser740 each carry phosphoserine. The segment covering 741–755 (QNSSQHSVSSLRSLH) has biased composition (low complexity). Ser799 is subject to Phosphoserine. Residues 840 to 922 (DIFLWRKETG…QGHVNLTVRR (83 aa)) enclose the PDZ 4 domain. The disordered stretch occupies residues 932–984 (ENEVPSPASSHHSSNQPASLTEEKRTPQGSQNSLNTVSSGSGSTSGIGSGGGG). Composition is skewed to polar residues over residues 938-950 (PASSHHSSNQPAS) and 958-967 (PQGSQNSLNT). Over residues 974-984 (STSGIGSGGGG) the composition is skewed to gly residues. The PDZ 5 domain occupies 997 to 1093 (DVEIRRGENE…TVTLRIIPGD (97 aa)). Ser1070 carries the phosphoserine modification. Over residues 1111-1129 (TTTHAPSQQGTQETRTTTK) the composition is skewed to polar residues. The segment at 1111–1142 (TTTHAPSQQGTQETRTTTKPKPDSQFEFKGPQ) is disordered. In terms of domain architecture, PDZ 6 spans 1151–1233 (TVELERGAKG…RVRLFLRRGD (83 aa)).

Part of a complex composed of AMOTL2, MAGI1 and CDH5, within the complex AMOTL2 acts as a scaffold protein for the interaction of MAGI1 with CDH5. The complex is required for coupling actin fibers to cell junctions in endothelial cells. Interacts through its WW 2 domain with SYNPO and through its PDZ 5 domain with ACTN4. Interacts with cytoplasmic domain of ADGRB1. Interacts via its WW domains with DRPLA. Interacts with ESAM, LRP2 and CXADR. May interact with CTNNB1. Interacts through its PDZ 1 domain with NET1. Interacts with ASIC3 and AMOT. Interacts with FCHSD2. Interacts with IGSF5/JAM4 and through its PDZ 2 and 3 domains with NPHS1 forming a tripartite complex. Interacts with DDN. May interact (via PDZ domain) with RAPGEF2. Interacts with DLL1. Interacts with KCNJ10 and possibly with KCNJ10/KCNJ16 heterodimer; this interaction may facilitate KCNJ10/KCNJ16 potassium channel expression at the basolateral membrane in kidney tubular cells. Interacts with PRRG4 (via cytoplasmic domain).

Its subcellular location is the cell junction. The protein localises to the tight junction. The protein resides in the cytoplasm. It is found in the membrane. Functionally, plays a role in coupling actin fibers to cell junctions in endothelial cells, via its interaction with AMOTL2 and CDH5. May regulate acid-induced ASIC3 currents by modulating its expression at the cell surface. In Rattus norvegicus (Rat), this protein is Membrane-associated guanylate kinase, WW and PDZ domain-containing protein 1 (Magi1).